The chain runs to 71 residues: Plasticin-DA1 (71 aa).

Residues 1 to 22 (MAFLKKSLFLVLFLALVPLSIC) form the signal peptide. A propeptide spanning residues 23-42 (EAEKREEENEEKQEDDDESE) is cleaved from the precursor. The tract at residues 25-45 (EKREEENEEKQEDDDESEKKR) is disordered. Acidic residues predominate over residues 30–40 (ENEEKQEDDDE). At Gly-68 the chain carries Glycine amide. A propeptide spanning residues 70 to 71 (ER) is cleaved from the precursor.

It belongs to the frog skin active peptide (FSAP) family. Plasticin subfamily. In terms of tissue distribution, expressed by the skin glands.

The protein resides in the secreted. Its subcellular location is the target cell membrane. Neutral peptide with no antimicrobial activity. Does not permeate bacterial membranes. May act in synergy with cationic peptides by enhancing their activity. Has a moderate hemolytic activity. It interacts with zwitterionic phospholipids (DMPC) without perturbing either the interface or inside of the bilayer, whereas it causes little perturbations at the interface peptide-anionic vesicles (DMPG) as well as in the bilayer alkyl chains. In Agalychnis dacnicolor (Giant Mexican leaf frog), this protein is Plasticin-DA1.